The following is a 307-amino-acid chain: Ornithine carbamoyltransferase (307 aa).

Residues 53–56 (STRT), Q80, R104, and 131–134 (HPCQ) contribute to the carbamoyl phosphate site. Residues N162, D219, and 223 to 224 (SM) each bind L-ornithine. Residues 259-260 (CL) and R287 each bind carbamoyl phosphate.

It belongs to the aspartate/ornithine carbamoyltransferase superfamily. OTCase family.

It localises to the cytoplasm. The enzyme catalyses carbamoyl phosphate + L-ornithine = L-citrulline + phosphate + H(+). The protein operates within amino-acid biosynthesis; L-arginine biosynthesis; L-arginine from L-ornithine and carbamoyl phosphate: step 1/3. Reversibly catalyzes the transfer of the carbamoyl group from carbamoyl phosphate (CP) to the N(epsilon) atom of ornithine (ORN) to produce L-citrulline. The chain is Ornithine carbamoyltransferase from Psychrobacter arcticus (strain DSM 17307 / VKM B-2377 / 273-4).